Here is an 832-residue protein sequence, read N- to C-terminus: MPLSYQHFRRLLLLDDEAGPLEEELPRLADEGLNRRVAEDLNLGNLNVSIPWTHKVGNFTGLYSSSVPVFNPHWKTPTFPNIHLHQDIINKCEQFVGPLTVNEKRRLQLIMPARFYPNFTKYLPLDKGIKPYYPEHLVNHYFQTRHYLHTLWKAGILYKRETTHSASFCGSPYSWEQKLQHGAESFHQQSPGILSRPPVGSSLQSKHQKSRLGLQSQQGHLARRQQGRSWSIRARVHPTARRPFGVEPAGSGHTTNFASKSASCSYQSPVRKAAYPTVSTSKRRSSSGHAVDFHNLPPSSARSQSERPVFPCWWLQFRNSKPCSDYCLSHIVNLLEDWGPCTEHGEHHIRIPRTPARVTGGVFLVDKNPHNTAESRLVVDFSQFSRGNYRVSWPKFAVPNLQSLTNLLSSNLSWLSLDVSAAFYHLPLHPAAMPHLLVGSSGLSRYVARLSSNSRIFDHQHGTMQNLHDYCSRNLYVSLLLLYQTFGRKLHLYSHPIILGFRKIPMGVGLSPFLLAQFTSAICSVVRRAFPHCLAFSYMDDVVLGAKSVQHLESLFTAVTNFLLSLGIHLNPNKTKRWGYSLHFMGYVIGSWGSLPQDHIVHKLKECFRKLPVNRPIDWKVCQRIVGLLGFAAPFTQCGYPALMPLYACIQSKQAFTFSPTYKAFLYKQYMNLYPVARQRSGLCQVFADATPTGWGLAMGHQRMRGTFQAPLPIHTAELLAACFARSRSGANILGTDNSVVLSRKYTSFPWLLGCAANWILRGTSFVYVPSALNPADDPSRGRLGLCRPLLRLPFRPTTGRTSLYAVSPSVPSHLPDHVHFASPLHVAWRPP.

A terminal protein domain (TP) region spans residues 1–177 (MPLSYQHFRR…FCGSPYSWEQ (177 aa)). The interval 178–335 (KLQHGAESFH…YCLSHIVNLL (158 aa)) is spacer. Disordered regions lie at residues 186–229 (FHQQ…QGRS) and 275–305 (YPTVSTSKRRSSSGHAVDFHNLPPSSARSQS). The tract at residues 336-679 (EDWGPCTEHG…YMNLYPVARQ (344 aa)) is polymerase/reverse transcriptase domain (RT). A Reverse transcriptase domain is found at 346 to 589 (EHHIRIPRTP…YSLHFMGYVI (244 aa)). Mg(2+) is bound by residues D418, D540, and D541.

The protein belongs to the hepadnaviridae P protein family.

The catalysed reaction is DNA(n) + a 2'-deoxyribonucleoside 5'-triphosphate = DNA(n+1) + diphosphate. It carries out the reaction Endonucleolytic cleavage to 5'-phosphomonoester.. Its activity is regulated as follows. Activated by host HSP70 and HSP40 in vitro to be able to bind the epsilon loop of the pgRNA. Because deletion of the RNase H region renders the protein partly chaperone-independent, the chaperones may be needed indirectly to relieve occlusion of the RNA-binding site by this domain. Inhibited by several reverse-transcriptase inhibitors: Lamivudine, Adefovir and Entecavir. In terms of biological role, multifunctional enzyme that converts the viral RNA genome into dsDNA in viral cytoplasmic capsids. This enzyme displays a DNA polymerase activity that can copy either DNA or RNA templates, and a ribonuclease H (RNase H) activity that cleaves the RNA strand of RNA-DNA heteroduplexes in a partially processive 3'- to 5'-endonucleasic mode. Neo-synthesized pregenomic RNA (pgRNA) are encapsidated together with the P protein, and reverse-transcribed inside the nucleocapsid. Initiation of reverse-transcription occurs first by binding the epsilon loop on the pgRNA genome, and is initiated by protein priming, thereby the 5'-end of (-)DNA is covalently linked to P protein. Partial (+)DNA is synthesized from the (-)DNA template and generates the relaxed circular DNA (RC-DNA) genome. After budding and infection, the RC-DNA migrates in the nucleus, and is converted into a plasmid-like covalently closed circular DNA (cccDNA). The activity of P protein does not seem to be necessary for cccDNA generation, and is presumably released from (+)DNA by host nuclear DNA repair machinery. The sequence is that of Protein P from Homo sapiens (Human).